Reading from the N-terminus, the 357-residue chain is uncharacterized protein (357 aa).

This is an uncharacterized protein from Mycobacterium bovis (strain ATCC BAA-935 / AF2122/97).